We begin with the raw amino-acid sequence, 242 residues long: Polycomb group RING finger protein 3 (242 aa).

The segment at 17-56 (CRLCSGYLIDATTVTECLHTFCRSCLVKYLEENNTCPTCR) adopts an RING-type zinc-finger fold. The segment at 115–149 (AKQHLDSHRNGETKADDSSNKEAAEEKPEEDNDYH) is disordered. The span at 117 to 140 (QHLDSHRNGETKADDSSNKEAAEE) shows a compositional bias: basic and acidic residues. The interval 132-242 (SSNKEAAEEK…LHYRPKMDLL (111 aa)) is interaction with BCORL1.

Component of a PRC1-like complex that contains PCGF3, RNF2 and RYBP. Interacts with CBX6, CBX7 and CBX8. Interacts with BCORL1.

The protein resides in the nucleus. The protein localises to the nucleoplasm. Functionally, component of a Polycomb group (PcG) multiprotein PRC1-like complex, a complex class required to maintain the transcriptionally repressive state of many genes, including Hox genes, throughout development. PcG PRC1 complex acts via chromatin remodeling and modification of histones; it mediates monoubiquitination of histone H2A 'Lys-119', rendering chromatin heritably changed in its expressibility. Within the PRC1-like complex, regulates RNF2 ubiquitin ligase activity. Plays a redundant role with PCGF5 as part of a PRC1-like complex that mediates monoubiquitination of histone H2A 'Lys-119' on the X chromosome and is required for normal silencing of one copy of the X chromosome in XX females. The sequence is that of Polycomb group RING finger protein 3 (PCGF3) from Homo sapiens (Human).